Reading from the N-terminus, the 337-residue chain is 1-aminocyclopropane-1-carboxylate deaminase (337 aa).

Lys-50 is modified (N6-(pyridoxal phosphate)lysine).

It belongs to the ACC deaminase/D-cysteine desulfhydrase family. In terms of assembly, homotrimer. Pyridoxal 5'-phosphate serves as cofactor.

The enzyme catalyses 1-aminocyclopropane-1-carboxylate + H2O = 2-oxobutanoate + NH4(+). Its function is as follows. Catalyzes a cyclopropane ring-opening reaction, the irreversible conversion of 1-aminocyclopropane-1-carboxylate (ACC) to ammonia and alpha-ketobutyrate. Allows growth on ACC as a nitrogen source. The polypeptide is 1-aminocyclopropane-1-carboxylate deaminase (Mesorhizobium japonicum (strain LMG 29417 / CECT 9101 / MAFF 303099) (Mesorhizobium loti (strain MAFF 303099))).